A 501-amino-acid polypeptide reads, in one-letter code: Uridine kinase (501 aa).

Ser17 is modified (phosphoserine). Position 63–70 (Gly63–Thr70) interacts with ATP. At Ser276 the chain carries Phosphoserine.

Belongs to the uridine kinase family.

The protein localises to the cytoplasm. Its subcellular location is the nucleus. The enzyme catalyses uridine + ATP = UMP + ADP + H(+). The catalysed reaction is cytidine + ATP = CMP + ADP + H(+). The protein operates within pyrimidine metabolism; CTP biosynthesis via salvage pathway; CTP from cytidine: step 1/3. It functions in the pathway pyrimidine metabolism; UMP biosynthesis via salvage pathway; UMP from uridine: step 1/1. Catalyzes the conversion of uridine into UMP and cytidine into CMP in the pyrimidine salvage pathway. In Saccharomyces cerevisiae (strain ATCC 204508 / S288c) (Baker's yeast), this protein is Uridine kinase (URK1).